The following is a 318-amino-acid chain: Endochitinase 3 (318 aa).

An N-terminal signal peptide occupies residues 1-18 (EFTIFSLLFSLLLLNASA). The Chitin-binding type-1 domain maps to 19–60 (EQCGSQAGGALCAPGLCCSKFGWCGNTNDYCGPGNCQSQCPG). Intrachain disulfides connect C21–C36, C30–C42, C35–C49, C54–C58, C89–C152, C164–C172, and C271–C303. The active-site Proton donor is E134. Positions 312-318 (GLLVDTV) are cleaved as a propeptide — removed in mature form, vacuolar targeting.

This sequence belongs to the glycosyl hydrolase 19 family. Chitinase class I subfamily.

The protein resides in the vacuole. The catalysed reaction is Random endo-hydrolysis of N-acetyl-beta-D-glucosaminide (1-&gt;4)-beta-linkages in chitin and chitodextrins.. Its function is as follows. Defense against chitin-containing fungal pathogens. The sequence is that of Endochitinase 3 (CHTB3) from Solanum tuberosum (Potato).